A 1615-amino-acid polypeptide reads, in one-letter code: Mediator of RNA polymerase II transcription subunit 23 (1615 aa).

2 disordered regions span residues 40 to 67 (RQKP…DLPP) and 1230 to 1270 (SSSS…NASE). Basic and acidic residues predominate over residues 41-51 (QKPDESLRDPP). Low complexity predominate over residues 1230–1241 (SSSSNCSSRSGS).

The protein belongs to the Mediator complex subunit 23 family. Component of the Mediator complex.

Its subcellular location is the nucleus. Functionally, component of the Mediator complex, a coactivator involved in the regulated transcription of nearly all RNA polymerase II-dependent genes. Mediator functions as a bridge to convey information from gene-specific regulatory proteins to the basal RNA polymerase II transcription machinery. The Mediator complex, having a compact conformation in its free form, is recruited to promoters by direct interactions with regulatory proteins and serves for the assembly of a functional preinitiation complex with RNA polymerase II and the general transcription factors. In Arabidopsis thaliana (Mouse-ear cress), this protein is Mediator of RNA polymerase II transcription subunit 23 (MED23).